The primary structure comprises 91 residues: Probable Fe(2+)-trafficking protein (91 aa).

It belongs to the Fe(2+)-trafficking protein family.

In terms of biological role, could be a mediator in iron transactions between iron acquisition and iron-requiring processes, such as synthesis and/or repair of Fe-S clusters in biosynthetic enzymes. The protein is Probable Fe(2+)-trafficking protein of Burkholderia multivorans (strain ATCC 17616 / 249).